The following is a 591-amino-acid chain: Aspartate--tRNA(Asp/Asn) ligase (591 aa).

An L-aspartate-binding site is contributed by E170. Positions 194 to 197 (QLFK) are aspartate. Position 216 (R216) interacts with L-aspartate. Residues 216 to 218 (RDE) and Q225 each bind ATP. H448 contacts L-aspartate. Residue E482 participates in ATP binding. Position 489 (R489) interacts with L-aspartate. 534–537 (GWDR) serves as a coordination point for ATP. The disordered stretch occupies residues 559-591 (GGVDPLTDAPAPITEQQRKESGIDVKPEPSKPH). The span at 574–591 (QQRKESGIDVKPEPSKPH) shows a compositional bias: basic and acidic residues.

The protein belongs to the class-II aminoacyl-tRNA synthetase family. Type 1 subfamily. Homodimer.

The protein resides in the cytoplasm. It carries out the reaction tRNA(Asx) + L-aspartate + ATP = L-aspartyl-tRNA(Asx) + AMP + diphosphate. Functionally, aspartyl-tRNA synthetase with relaxed tRNA specificity since it is able to aspartylate not only its cognate tRNA(Asp) but also tRNA(Asn). Reaction proceeds in two steps: L-aspartate is first activated by ATP to form Asp-AMP and then transferred to the acceptor end of tRNA(Asp/Asn). The polypeptide is Aspartate--tRNA(Asp/Asn) ligase (Mycobacterium avium (strain 104)).